The primary structure comprises 37 residues: MKVRPSVKKMCDDCKVIKRKGIVRVICKNPKHKQRQG.

Belongs to the bacterial ribosomal protein bL36 family.

The chain is Large ribosomal subunit protein bL36 from Sulfurovum sp. (strain NBC37-1).